A 123-amino-acid polypeptide reads, in one-letter code: Thioredoxin domain-containing protein 17 (123 aa).

Residues 41 to 123 form the Thioredoxin domain; that stretch reads SWCPDCVKAE…DLVRMMFTED (83 aa). Active-site nucleophile residues include Cys-43 and Cys-46. Residues Cys-43 and Cys-46 are joined by a disulfide bond.

It belongs to the thioredoxin family.

The protein localises to the cytoplasm. Its function is as follows. Disulfide reductase. May participate in various redox reactions through the reversible oxidation of its active center dithiol to a disulfide and catalyze dithiol-disulfide exchange reactions. Has peroxidase activity and may contribute to the elimination of cellular hydrogen peroxide. This is Thioredoxin domain-containing protein 17 (txndc17) from Danio rerio (Zebrafish).